We begin with the raw amino-acid sequence, 551 residues long: ATPase expression protein 2, mitochondrial (551 aa).

A disordered region spans residues 530–551 (AQKAQKRFDDEEEDSMLLGRLW).

Belongs to the AEP2 family. Binds to the 5'UTR of the OLI1 mRNA.

Its subcellular location is the mitochondrion. Required for translation of the mitochondrial OLI1 transcript coding for the mitochondrial ATP synthase subunit 9. The sequence is that of ATPase expression protein 2, mitochondrial (AEP2) from Lachancea thermotolerans (strain ATCC 56472 / CBS 6340 / NRRL Y-8284) (Yeast).